We begin with the raw amino-acid sequence, 558 residues long: MVVDTTAAIKRALSECTGLAEIPLVDGGEHADLATTVAFALAKTKKQAPVKIAQDVVAALKNNRELSDLGVTVEAKGPYINFVFGSAYVTAALKAAVQPGYGSFPAKESPRIVLEHTSANPNGPLHVGHIRNSIIGDSLARAFRKAGYPLEVEYYVNDMGRQIAIVTWGFDHLEHGQHESEKEDAHIARVYIAANREIEKDPGITKQVDKLMELVESGDPETVKKFRREVSRCLDGFAVTLKNLNVKHDRFVWESDFVKNGDTKAVIAKIENLPQATHEGTLLALDLAEFGFTNKYVMRRSDGTSVYAARDLAFHTWKNQNFDRAIDVLGADHKLIGAQLQCTMQLLGEKAPEIVHFEFVSLPEGSMSTRAGKFVSADELIDEVTKRAFDEVTTRRPELDEATRRNIADSVARAGIRYDIVKISPEKSTVFDWKQALDFERQSGPYIQYAHARACSILEKAGAFEECYDLATEQEIILAKKIAKFPSVIEKVVTELRPHLLATYAHELADTFNTFYHYEPVLKSEGEVRDRRLTLVKAVQNTLQESLETLGIDAIHTM.

The 'HIGH' region signature appears at 119–129; the sequence is ANPNGPLHVGH.

This sequence belongs to the class-I aminoacyl-tRNA synthetase family.

The protein localises to the cytoplasm. It carries out the reaction tRNA(Arg) + L-arginine + ATP = L-arginyl-tRNA(Arg) + AMP + diphosphate. This chain is Arginine--tRNA ligase, found in Methanoregula boonei (strain DSM 21154 / JCM 14090 / 6A8).